Here is a 307-residue protein sequence, read N- to C-terminus: ATP synthase gamma chain (307 aa).

The protein belongs to the ATPase gamma chain family. F-type ATPases have 2 components, CF(1) - the catalytic core - and CF(0) - the membrane proton channel. CF(1) has five subunits: alpha(3), beta(3), gamma(1), delta(1), epsilon(1). CF(0) has three main subunits: a, b and c.

The protein resides in the cell membrane. Its function is as follows. Produces ATP from ADP in the presence of a proton gradient across the membrane. The gamma chain is believed to be important in regulating ATPase activity and the flow of protons through the CF(0) complex. This chain is ATP synthase gamma chain, found in Mycolicibacterium smegmatis (strain ATCC 700084 / mc(2)155) (Mycobacterium smegmatis).